A 192-amino-acid chain; its full sequence is tRNA (pseudouridine(54)-N(1))-methyltransferase (192 aa).

Positions 127 and 181 each coordinate S-adenosyl-L-methionine.

This sequence belongs to the methyltransferase superfamily. TrmY family. As to quaternary structure, homodimer.

Its subcellular location is the cytoplasm. It catalyses the reaction pseudouridine(54) in tRNA + S-adenosyl-L-methionine = N(1)-methylpseudouridine(54) in tRNA + S-adenosyl-L-homocysteine + H(+). In terms of biological role, specifically catalyzes the N1-methylation of pseudouridine at position 54 (Psi54) in tRNAs. In Methanocella arvoryzae (strain DSM 22066 / NBRC 105507 / MRE50), this protein is tRNA (pseudouridine(54)-N(1))-methyltransferase.